The chain runs to 278 residues: Putative transposase for insertion sequence element IS986/IS6110 (278 aa).

The Integrase catalytic domain occupies 101-268 (GPPAPNRLWV…VPPVELEAAY (168 aa)).

Functionally, involved in the transposition of the insertion sequence. In Mycobacterium tuberculosis (strain CDC 1551 / Oshkosh), this protein is Putative transposase for insertion sequence element IS986/IS6110.